A 163-amino-acid polypeptide reads, in one-letter code: Endoribonuclease YbeY (163 aa).

Histidine 121, histidine 125, and histidine 131 together coordinate Zn(2+).

This sequence belongs to the endoribonuclease YbeY family. The cofactor is Zn(2+).

The protein resides in the cytoplasm. In terms of biological role, single strand-specific metallo-endoribonuclease involved in late-stage 70S ribosome quality control and in maturation of the 3' terminus of the 16S rRNA. The chain is Endoribonuclease YbeY from Synechococcus sp. (strain JA-2-3B'a(2-13)) (Cyanobacteria bacterium Yellowstone B-Prime).